The sequence spans 148 residues: Puroindoline-A (148 aa).

Residues 1–19 form the signal peptide; that stretch reads MKALFLIGLLALVASTAFA. Residues 20–28 constitute a propeptide that is removed on maturation; it reads QYSEVVGSY. Positions 147-148 are cleaved as a propeptide — removed in mature form; that stretch reads YW.

In terms of processing, five disulfide bonds are present. In terms of tissue distribution, endosperm and aleurone layer of developing kernels. In the aleurone layer, mainly localized to starch granules and the surface of the plasma membrane, forming a uniform layer, also abundant in the intercellular space. In the endosperm, mainly localized to starch granules and the plasma membrane, but less abundant in the intercellular space. Not found in roots or coleoptiles.

The protein localises to the membrane. The protein resides in the secreted. It localises to the extracellular space. Functionally, acts as a membranotoxin, probably through its antibacterial and antifungal activities, contributing to the defense mechanism of the plant against predators. Forms monovalent cation-selective ion channels in membranes. Has antibacterial activity against the Gram-positive bacteria S.aureus and C.michiganensis, and the Gram-negative bacteria E.coli, P.syringae pv phaseoli, A.tumefaciens and E.carotovora subsp carotovora. Acts synergistically with PINB against bacteria. Contributes to grain texture and hardness. The sequence is that of Puroindoline-A (PINA) from Triticum aestivum (Wheat).